The primary structure comprises 1287 residues: Pullulanase A (1287 aa).

The N-terminal stretch at 1–44 is a signal peptide; it reads MRKTPSHTEKKMVYSIRSLKNGTGSVLIGASLVLLAMATPTISS. The tract at residues 42–139 is disordered; that stretch reads ISSDESTPTT…VTTETKAEEP (98 aa). The segment covering 48 to 61 has biased composition (low complexity); it reads TPTTNEPNNRNTTT. Residues 79 to 90 show a composition bias toward polar residues; sequence DISSPGNANASL. 2 stretches are compositionally biased toward low complexity: residues 99-113 and 122-133; these read TEPT…DPAP and EPTTSTSPVTTE. Substrate contacts are provided by residues 163–165, Trp175, Asp221, 270–272, Trp283, Lys325, and Asn330; these read WTW and WYW. The Ca(2+) site is built by Ser668 and Tyr670. Residues 674 to 675 and Phe750 contribute to the substrate site; that span reads YD. Residue Asp785 is the Nucleophile of the active site. Glu814 serves as the catalytic Proton donor. A substrate-binding site is contributed by Trp816. Ca(2+)-binding residues include Met835, Thr838, and Asp839. The substrate site is built by Asp846, Arg849, and Tyr856. Ca(2+) contacts are provided by Asp889 and Asp893. Residues Asn903, Lys976, and 996-998 each bind substrate; that span reads DSY. Residue Asp999 participates in Ca(2+) binding. The segment at 1147–1255 is disordered; the sequence is VSQNGTSHES…TPDRQAELPN (109 aa). Residues 1156 to 1203 are compositionally biased toward basic and acidic residues; the sequence is STAEEKPDSTPSKPEHQNEASHPAHQDPAPEARPDSTKPDAKVADAEN. Residues 1212–1225 show a composition bias toward low complexity; that stretch reads SQAEQPAQEAQASS. A compositionally biased stretch (basic and acidic residues) spans 1228–1239; it reads EAVRKESVENSS. Residues 1253–1257 carry the LPXTG sorting signal motif; that stretch reads LPNTG. Position 1256 is a pentaglycyl murein peptidoglycan amidated threonine (Thr1256). Positions 1257–1287 are cleaved as a propeptide — removed by sortase; that stretch reads GIKNENKLLFAGISLLALLGLGFLLKNKKEN.

This sequence belongs to the glycosyl hydrolase 13 family.

The protein resides in the secreted. The protein localises to the cell wall. It localises to the cell surface. The catalysed reaction is Hydrolysis of (1-&gt;6)-alpha-D-glucosidic linkages in pullulan, amylopectin and glycogen, and in the alpha- and beta-limit dextrins of amylopectin and glycogen.. Inhibited by 4-O-alpha-D-glucopyranosylmoranoline (G1M). Virulence factor. Involved in the degradation of glycogen of the mammalian host cells. Hydrolyzes the alpha-1,6-branchpoints of glycogen. Hydrolyzes pullulan. Does not hydrolyze dextran. Binds to mouse lung alveolar type II cells that are rich in glycogen stores. Is an alpha-glucan-specific carbohydrate-binding protein, which binds to amylose (pure alpha-(1,4)-linked glucose), amylopectin (alpha-(1,4)-linked glucose with alpha-(1,6) branch points), pullulan (linear polymer of mixed alpha-(1,4)- and alpha-(1,6)-linked glucose) and glycogen (similar to amylopectin with more frequent alpha-(1,6) branch points) in vitro. Does not bind to dextran (a linear polymer of alpha-(1,6)-linked glucose). The polypeptide is Pullulanase A (Streptococcus pneumoniae).